Consider the following 505-residue polypeptide: Glycerol kinase (505 aa).

T13 is a binding site for ADP. T13, T14, and S15 together coordinate ATP. T13 is a sn-glycerol 3-phosphate binding site. R17 lines the ADP pocket. Sn-glycerol 3-phosphate-binding residues include R83, E84, Y135, and D247. Residues R83, E84, Y135, D247, and Q248 each coordinate glycerol. 2 residues coordinate ADP: T269 and G313. ATP-binding residues include T269, G313, Q317, and G414. 2 residues coordinate ADP: G414 and N418.

Belongs to the FGGY kinase family.

The enzyme catalyses glycerol + ATP = sn-glycerol 3-phosphate + ADP + H(+). It functions in the pathway polyol metabolism; glycerol degradation via glycerol kinase pathway; sn-glycerol 3-phosphate from glycerol: step 1/1. Inhibited by fructose 1,6-bisphosphate (FBP). In terms of biological role, key enzyme in the regulation of glycerol uptake and metabolism. Catalyzes the phosphorylation of glycerol to yield sn-glycerol 3-phosphate. The protein is Glycerol kinase of Clavibacter michiganensis subsp. michiganensis (strain NCPPB 382).